We begin with the raw amino-acid sequence, 177 residues long: Inorganic pyrophosphatase (177 aa).

Substrate is bound by residues lysine 31, arginine 45, and tyrosine 57. Mg(2+) contacts are provided by aspartate 67, aspartate 72, and aspartate 104. Position 141 (tyrosine 141) interacts with substrate.

This sequence belongs to the PPase family. In terms of assembly, homohexamer. Mg(2+) is required as a cofactor.

It localises to the cytoplasm. It catalyses the reaction diphosphate + H2O = 2 phosphate + H(+). Catalyzes the hydrolysis of inorganic pyrophosphate (PPi) forming two phosphate ions. The polypeptide is Inorganic pyrophosphatase (Halobacterium salinarum (strain ATCC 700922 / JCM 11081 / NRC-1) (Halobacterium halobium)).